We begin with the raw amino-acid sequence, 59 residues long: UPF0434 protein HDEF_0234 (59 aa).

This sequence belongs to the UPF0434 family.

In Hamiltonella defensa subsp. Acyrthosiphon pisum (strain 5AT), this protein is UPF0434 protein HDEF_0234.